The following is a 133-amino-acid chain: Crossover junction endodeoxyribonuclease Hjc (133 aa).

Position 12 (Glu-12) interacts with Mg(2+). Residue Ser-32 is part of the active site. Residues Asp-36 and Glu-49 each coordinate Mg(2+).

It belongs to the Holliday junction resolvase Hjc family. In terms of assembly, homodimer. It depends on Mg(2+) as a cofactor.

The enzyme catalyses Endonucleolytic cleavage at a junction such as a reciprocal single-stranded crossover between two homologous DNA duplexes (Holliday junction).. Functionally, a structure-specific endonuclease that resolves Holliday junction (HJ) intermediates during genetic recombination. Cleaves 4-way DNA junctions introducing paired nicks in opposing strands, leaving a 5'-terminal phosphate and a 3'-terminal hydroxyl group that are subsequently ligated to produce recombinant products. The chain is Crossover junction endodeoxyribonuclease Hjc from Methanocaldococcus jannaschii (strain ATCC 43067 / DSM 2661 / JAL-1 / JCM 10045 / NBRC 100440) (Methanococcus jannaschii).